We begin with the raw amino-acid sequence, 373 residues long: Peroxisomal biogenesis factor 3 (373 aa).

Topologically, residues 1–15 are cytoplasmic; the sequence is MLRSMWNFLKRHKKK. The targeting to peroxisomes stretch occupies residues 1–45; the sequence is MLRSMWNFLKRHKKKCIFLGTVLGGVYILGKYGQKKIREIQEREA. Residues 16-36 form a helical membrane-spanning segment; it reads CIFLGTVLGGVYILGKYGQKK. Topologically, residues 37 to 116 are peroxisomal; that stretch reads IREIQEREAA…LKIISFTRSI (80 aa). A helical membrane pass occupies residues 117–140; the sequence is VAVYSTCMLVVLLRVQLNIIGGYI. The tract at residues 120-136 is interaction with PEX19; the sequence is YSTCMLVVLLRVQLNII. Residues 141–373 lie on the Cytoplasmic side of the membrane; that stretch reads YLDNATVGKN…AFSTPQQLEK (233 aa).

It belongs to the peroxin-3 family. Interacts with PEX19.

Its subcellular location is the peroxisome membrane. Involved in peroxisome biosynthesis and integrity. Assembles membrane vesicles before the matrix proteins are translocated. As a docking factor for PEX19, is necessary for the import of peroxisomal membrane proteins in the peroxisomes. This is Peroxisomal biogenesis factor 3 (PEX3) from Cricetulus longicaudatus (Long-tailed dwarf hamster).